Consider the following 387-residue polypeptide: Patatin-03 (387 aa).

A signal peptide spans 1 to 23; that stretch reads MATTKSVLVLIFMILATTSSTFA. Residues 32 to 230 form the PNPLA domain; that stretch reads LSIDGGGIKG…TVADPALLSV (199 aa). The short motif at 36-41 is the GXGXXG element; sequence GGGIKG. Residues 75–79 carry the GXSXG motif; it reads GTSTG. The active-site Nucleophile is Ser77. 2 N-linked (GlcNAc...) asparagine glycosylation sites follow: Asn115 and Asn203. Asp216 serves as the catalytic Proton acceptor. A DGA/G motif is present at residues 216 to 218; the sequence is DGA.

The protein belongs to the patatin family. Tuber.

It is found in the vacuole. Probable lipolytic acyl hydrolase (LAH), an activity which is thought to be involved in the response of tubers to pathogens. In Solanum tuberosum (Potato), this protein is Patatin-03.